The primary structure comprises 190 residues: Recombination protein RecR (190 aa).

The C4-type zinc finger occupies 58–73 (CGQCGALSENELCEIC). Residues 81–167 (NILCIVESPK…TFSKIAQGIP (87 aa)) enclose the Toprim domain.

Belongs to the RecR family.

Functionally, may play a role in DNA repair. It seems to be involved in an RecBC-independent recombinational process of DNA repair. It may act with RecF and RecO. This chain is Recombination protein RecR, found in Campylobacter jejuni subsp. jejuni serotype O:6 (strain 81116 / NCTC 11828).